The following is a 140-amino-acid chain: Putative 6-pyruvoyl tetrahydrobiopterin synthase (140 aa).

Residue His-19 participates in Zn(2+) binding. Residue Cys-38 is the Proton acceptor of the active site. Residues His-44 and His-46 each coordinate Zn(2+). Active-site charge relay system residues include His-84 and Glu-129.

Belongs to the PTPS family. Homohexamer formed of two homotrimers in a head to head fashion. Zn(2+) serves as cofactor.

It carries out the reaction 7,8-dihydroneopterin 3'-triphosphate = 6-pyruvoyl-5,6,7,8-tetrahydropterin + triphosphate + H(+). Its pathway is cofactor biosynthesis; tetrahydrobiopterin biosynthesis; tetrahydrobiopterin from 7,8-dihydroneopterin triphosphate: step 1/3. Functionally, involved in the biosynthesis of tetrahydrobiopterin, an essential cofactor of aromatic amino acid hydroxylases. Catalyzes the transformation of 7,8-dihydroneopterin triphosphate into 6-pyruvoyl tetrahydropterin. In Caenorhabditis elegans, this protein is Putative 6-pyruvoyl tetrahydrobiopterin synthase (ptps-1).